The sequence spans 670 residues: MSAIQLQIANLVNELNQHNIKYYVDDAPSVTDAYYDKLMQQLLALEAEHPELIQSDSPSRRVGGHALDKFSQVTHLKPMLSLDNAFEQADFEAFNKRITDKVGTVDYVCEPKLDGLAVSITYRNGQFERAATRGDGTVGEDITENVRTIKSIPMGLRGDGYPELVEVRGEVFMPKAAFDALNARQQAKGDKTFVNPRNAAAGSLRQLDSKITASRALGFYAYALGVVEGEVQPMEPSHFGQLAQLKRWGLPVSQEVKLCDSLEKVYAYYDDILNRRGQLSYEIDGVVIKVNAIPKQLSLGFVAKAPRWAIAYKFPAQEEMTLLESVDFQVGRTGAVTPVARLQAVFVGGVTVSNATLHNADEIARLGVKIGDTVIIRRAGDVIPQIVAIVPEKRPQDAQNIVFPTHCPVCQSLVERLEGEAVARCSGGLFCEAQRKEAIKHFASRKALNIDGMGDKIVEQLIDKELVQSPADLFGLTASMMTMLERMAMKSATKLVAAIDAAKTTTLARFIYSLGIREVGEATAANLANHFKSLAAVREAGVEQLLEVADVGEIVAKHIRHFFDQAHNLEVVDKLLAAGINWPEITAVAEDELRLKGQTWVLTGTLTQLNRNEAKAQLQALGAKVAGSISKNTDCLVAGEAAGSKLAKAQELGVKVIDETELLVFLGLAG.

NAD(+) contacts are provided by residues 32-36 (DAYYD), 81-82 (SL), and E110. K112 acts as the N6-AMP-lysine intermediate in catalysis. NAD(+)-binding residues include R133, E170, K289, and K313. Positions 407, 410, 425, and 431 each coordinate Zn(2+). One can recognise a BRCT domain in the interval 590 to 670 (EDELRLKGQT…ELLVFLGLAG (81 aa)).

Belongs to the NAD-dependent DNA ligase family. LigA subfamily. Mg(2+) serves as cofactor. It depends on Mn(2+) as a cofactor.

The catalysed reaction is NAD(+) + (deoxyribonucleotide)n-3'-hydroxyl + 5'-phospho-(deoxyribonucleotide)m = (deoxyribonucleotide)n+m + AMP + beta-nicotinamide D-nucleotide.. In terms of biological role, DNA ligase that catalyzes the formation of phosphodiester linkages between 5'-phosphoryl and 3'-hydroxyl groups in double-stranded DNA using NAD as a coenzyme and as the energy source for the reaction. It is essential for DNA replication and repair of damaged DNA. In Shewanella denitrificans (strain OS217 / ATCC BAA-1090 / DSM 15013), this protein is DNA ligase.